The sequence spans 306 residues: Probable 2-dehydro-3-deoxygalactonokinase DgoK1 (306 aa).

Belongs to the DgoK family.

The catalysed reaction is 2-dehydro-3-deoxy-D-galactonate + ATP = 2-dehydro-3-deoxy-6-phospho-D-galactonate + ADP + H(+). It participates in carbohydrate acid metabolism; D-galactonate degradation; D-glyceraldehyde 3-phosphate and pyruvate from D-galactonate: step 2/3. Functionally, involved in the degradation of galactose via the DeLey-Doudoroff pathway. This Rhizobium meliloti (strain 1021) (Ensifer meliloti) protein is Probable 2-dehydro-3-deoxygalactonokinase DgoK1 (dgoK1).